A 248-amino-acid polypeptide reads, in one-letter code: MSRMPRYKLTIEYDGAPFCGWQLQPALPSVQGALEAAALATCGEAVRVHGAGRTDAGVHALGQVAHVDIPKPFRADKLRDALNAHLRPNPVAVLAAEIVPDTFEARFSAVRRHYRYRIANRRSNLALDLGKVWRVPKPLDTDAMHRAAQVLIGKHNFTTFRDTECQAASPEKTLDVLDVIRDGDAVDIITNARSYLHSQVRSMVGSLVWVGEGRWTADDLAAALAARRRSACGPVAPPEGLYLMQVDY.

The active-site Nucleophile is the D55. Y114 serves as a coordination point for substrate.

This sequence belongs to the tRNA pseudouridine synthase TruA family. Homodimer.

The enzyme catalyses uridine(38/39/40) in tRNA = pseudouridine(38/39/40) in tRNA. Functionally, formation of pseudouridine at positions 38, 39 and 40 in the anticodon stem and loop of transfer RNAs. This is tRNA pseudouridine synthase A from Rhodopseudomonas palustris (strain ATCC BAA-98 / CGA009).